Here is a 39-residue protein sequence, read N- to C-terminus: Potassium channel toxin alpha-KTx 2.24 (39 aa).

Intrachain disulfides connect Cys7-Cys29, Cys13-Cys34, and Cys17-Cys36.

This sequence belongs to the short scorpion toxin superfamily. Potassium channel inhibitor family. Alpha-KTx 02 subfamily. As to expression, expressed by the venom gland.

It is found in the secreted. Functionally, blocks human voltage-gated potassium (Kv) channels Kv1.1/KCNA, Kv1.2/KCNA2 and Kv1.3/KCNA3. Exhibits high affinity for Kv1.2/KCNA2 and selectivity over Kv1.1/KCNA and Kv1.3/KCNA3. The sequence is that of Potassium channel toxin alpha-KTx 2.24 from Centruroides bonito (Scorpion).